Reading from the N-terminus, the 92-residue chain is Small ribosomal subunit protein uS19 (92 aa).

The protein belongs to the universal ribosomal protein uS19 family.

Protein S19 forms a complex with S13 that binds strongly to the 16S ribosomal RNA. The polypeptide is Small ribosomal subunit protein uS19 (Prochlorococcus marinus (strain MIT 9301)).